Consider the following 588-residue polypeptide: Adenine deaminase (588 aa).

The protein belongs to the metallo-dependent hydrolases superfamily. Adenine deaminase family. In terms of assembly, homodimer. Requires Mn(2+) as cofactor.

The catalysed reaction is adenine + H2O + H(+) = hypoxanthine + NH4(+). In Escherichia coli O81 (strain ED1a), this protein is Adenine deaminase.